Consider the following 376-residue polypeptide: Multiphosphoryl transfer protein (376 aa).

In terms of domain architecture, PTS EIIA type-2 spans 2 to 142; that stretch reads FQLSVQDIHP…EELRALLMGE (141 aa). Residue histidine 62 is the Tele-phosphohistidine intermediate; for EIIA activity of the active site. A Phosphohistidine; by HPr modification is found at histidine 62. Residues 156–284 are m domain; it reads TLDVIASSLV…LTSDDALTDD (129 aa). An HPr domain is found at 285–375; that stretch reads VLSAEFVVRN…DAIAAGLGEG (91 aa). Residue histidine 299 is the Pros-phosphohistidine intermediate; for HPr activity of the active site. Residue histidine 299 is modified to Phosphohistidine; by EI.

The protein localises to the cytoplasm. Functionally, the phosphoenolpyruvate-dependent sugar phosphotransferase system (sugar PTS), a major carbohydrate active transport system, catalyzes the phosphorylation of incoming sugar substrates concomitantly with their translocation across the cell membrane. The enzyme II FruAB PTS system is involved in fructose transport. This Salmonella typhimurium (strain LT2 / SGSC1412 / ATCC 700720) protein is Multiphosphoryl transfer protein (fruB).